Reading from the N-terminus, the 295-residue chain is Nucleotide-binding protein RD1_1380 (295 aa).

An ATP-binding site is contributed by 16-23 (GPSGAGRS). 63 to 66 (DPRN) contacts GTP.

The protein belongs to the RapZ-like family.

Functionally, displays ATPase and GTPase activities. This is Nucleotide-binding protein RD1_1380 from Roseobacter denitrificans (strain ATCC 33942 / OCh 114) (Erythrobacter sp. (strain OCh 114)).